The primary structure comprises 401 residues: Argininosuccinate synthase (401 aa).

8-16 contributes to the ATP binding site; it reads AYSGGLDTS. Residue Tyr85 coordinates L-citrulline. Gly115 is a binding site for ATP. Residues Thr117, Asn121, and Asp122 each coordinate L-aspartate. Asn121 lines the L-citrulline pocket. Positions 125, 173, 258, and 270 each coordinate L-citrulline.

The protein belongs to the argininosuccinate synthase family. Type 1 subfamily. As to quaternary structure, homotetramer.

It localises to the cytoplasm. It catalyses the reaction L-citrulline + L-aspartate + ATP = 2-(N(omega)-L-arginino)succinate + AMP + diphosphate + H(+). Its pathway is amino-acid biosynthesis; L-arginine biosynthesis; L-arginine from L-ornithine and carbamoyl phosphate: step 2/3. This Staphylococcus epidermidis (strain ATCC 35984 / DSM 28319 / BCRC 17069 / CCUG 31568 / BM 3577 / RP62A) protein is Argininosuccinate synthase.